A 372-amino-acid chain; its full sequence is Protein RecA (372 aa).

Residue 81 to 88 participates in ATP binding; the sequence is GPESSGKT.

It belongs to the RecA family.

The protein resides in the cytoplasm. Functionally, can catalyze the hydrolysis of ATP in the presence of single-stranded DNA, the ATP-dependent uptake of single-stranded DNA by duplex DNA, and the ATP-dependent hybridization of homologous single-stranded DNAs. It interacts with LexA causing its activation and leading to its autocatalytic cleavage. The chain is Protein RecA from Haemophilus ducreyi (strain 35000HP / ATCC 700724).